We begin with the raw amino-acid sequence, 293 residues long: MSAMGAGPDHLFNLRNNFYLGAYQTAINNSEIANLSPENAVERDCLVFRSYIALGSYQLVISEIDESAATPLQAVKLLAMYLSTPQNKESTISSLKEWLADSTIGNNDTLRLIAGIIFMHEEDYNETLKHTHAGGTMDLYALNVQIFIKMHRAEYAEKQLRVMQQIDEDHTLTQLASAWLNLAVGGSKIQEAYLIFEDFSEKYPMTCLILNGKAVCCMQMGNFDEAETLLLEALNKDAKDPETLANLVVCSLHVGKSSSRHLSQLKLSHPEHILVKRVSSAEDNFERAVQLVA.

The protein belongs to the COPE family. In terms of assembly, oligomeric complex that consists of at least the alpha, beta, beta', gamma, delta, epsilon and zeta subunits.

It localises to the cytoplasm. The protein localises to the golgi apparatus membrane. The protein resides in the cytoplasmic vesicle. It is found in the COPI-coated vesicle membrane. In terms of biological role, the coatomer is a cytosolic protein complex that binds to dilysine motifs and reversibly associates with Golgi non-clathrin-coated vesicles, which further mediate biosynthetic protein transport from the ER, via the Golgi up to the trans Golgi network. The coatomer complex is required for budding from Golgi membranes, and is essential for the retrograde Golgi-to-ER transport of dilysine-tagged proteins. This Arabidopsis thaliana (Mouse-ear cress) protein is Coatomer subunit epsilon-2.